The chain runs to 87 residues: Keratin-associated protein 19-1 (87 aa).

Residues 6-72 (GYSGGLGYGY…SSYGGYGCGC (67 aa)) form a 21 X 2 AA repeats of G-[YCGS] region.

This sequence belongs to the KRTAP type 19 family. Interacts with hair keratins. As to expression, strong expression in narrowly defined pattern restricted to the lower and middle cortical regions of the hair shaft in both developing and cycling hair. During hair follicle regression (catagen), expression levels decrease until expression is no longer detectable in follicles at resting stage (telogen).

Its function is as follows. In the hair cortex, hair keratin intermediate filaments are embedded in an interfilamentous matrix, consisting of hair keratin-associated proteins (KRTAP), which are essential for the formation of a rigid and resistant hair shaft through their extensive disulfide bond cross-linking with abundant cysteine residues of hair keratins. The matrix proteins include the high-sulfur and high-glycine-tyrosine keratins. This Mus musculus (Mouse) protein is Keratin-associated protein 19-1 (Krtap19-1).